The chain runs to 329 residues: D-threo-aldose 1-dehydrogenase (329 aa).

The active-site Proton donor is Tyr-58. Residue His-145 coordinates substrate.

The protein belongs to the aldo/keto reductase family.

It catalyses the reaction a D-threo-aldose + NAD(+) = a D-threo-aldono-1,5-lactone + NADH + H(+). Inhibited strongly by Hg(2+), Cd(2+) and para-chloromercuribenzoic acid (PCMB) and weakly by Zn(2+) and iodoacetamide. Also inhibited strongly by L-xylose but not D-glucose. Catalyzes the oxidation of L-fucose to L-fuconolactone in the presence of NADP(+). Also active against L-galactose and, to a much lesser degree, D-arabinose. Uses NADP(+) as a hydrogen acceptor much more efficiently than NAD(+). The polypeptide is D-threo-aldose 1-dehydrogenase (Pseudomonas sp).